The following is a 193-amino-acid chain: Ribosomal RNA large subunit methyltransferase E (193 aa).

G48, F50, D67, N85, and D107 together coordinate S-adenosyl-L-methionine. The active-site Proton acceptor is K147.

This sequence belongs to the class I-like SAM-binding methyltransferase superfamily. RNA methyltransferase RlmE family.

It localises to the cytoplasm. It carries out the reaction uridine(2552) in 23S rRNA + S-adenosyl-L-methionine = 2'-O-methyluridine(2552) in 23S rRNA + S-adenosyl-L-homocysteine + H(+). In terms of biological role, specifically methylates the uridine in position 2552 of 23S rRNA at the 2'-O position of the ribose in the fully assembled 50S ribosomal subunit. This is Ribosomal RNA large subunit methyltransferase E from Borrelia duttonii (strain Ly).